A 389-amino-acid polypeptide reads, in one-letter code: Lipid-A-disaccharide synthase (389 aa).

It belongs to the LpxB family.

The enzyme catalyses a lipid X + a UDP-2-N,3-O-bis[(3R)-3-hydroxyacyl]-alpha-D-glucosamine = a lipid A disaccharide + UDP + H(+). The protein operates within bacterial outer membrane biogenesis; LPS lipid A biosynthesis. Condensation of UDP-2,3-diacylglucosamine and 2,3-diacylglucosamine-1-phosphate to form lipid A disaccharide, a precursor of lipid A, a phosphorylated glycolipid that anchors the lipopolysaccharide to the outer membrane of the cell. In Albidiferax ferrireducens (strain ATCC BAA-621 / DSM 15236 / T118) (Rhodoferax ferrireducens), this protein is Lipid-A-disaccharide synthase.